A 210-amino-acid chain; its full sequence is Cell wall protein SRL1 (210 aa).

The N-terminal stretch at 1–19 is a signal peptide; that stretch reads MLQSVVFFALLTFASSVSA. The N-linked (GlcNAc...) asparagine glycan is linked to asparagine 23. 2 disordered regions span residues 80-99 and 118-142; these read SLST…HEIT and LSPS…VKSF. Over residues 118–127 the composition is skewed to low complexity; the sequence is LSPSSTAASV. Over residues 132–141 the composition is skewed to basic and acidic residues; the sequence is SNNKDAKVKS. Residues asparagine 174, asparagine 200, and asparagine 206 are each glycosylated (N-linked (GlcNAc...) asparagine).

The protein resides in the secreted. The protein localises to the cell wall. Its subcellular location is the cell surface. Required to stabilize the cell wall in the absence of multiple GPI-anchored mannoproteins. This chain is Cell wall protein SRL1 (SRL1), found in Saccharomyces cerevisiae (strain ATCC 204508 / S288c) (Baker's yeast).